The primary structure comprises 178 residues: Large ribosomal subunit protein bL35m (178 aa).

This sequence belongs to the bacterial ribosomal protein bL35 family.

It localises to the mitochondrion. In Drosophila melanogaster (Fruit fly), this protein is Large ribosomal subunit protein bL35m (mRpL35).